The chain runs to 226 residues: ATP-dependent dethiobiotin synthetase BioD (226 aa).

12-17 (GVGKTV) lines the ATP pocket. Mg(2+) is bound at residue Thr-16. Lys-37 is an active-site residue. Thr-41 provides a ligand contact to substrate. ATP-binding positions include Asp-49, 108–111 (EGAG), 169–170 (GS), and 197–199 (PAG). 2 residues coordinate Mg(2+): Asp-49 and Glu-108.

This sequence belongs to the dethiobiotin synthetase family. Homodimer. Mg(2+) serves as cofactor.

It is found in the cytoplasm. It carries out the reaction (7R,8S)-7,8-diammoniononanoate + CO2 + ATP = (4R,5S)-dethiobiotin + ADP + phosphate + 3 H(+). Its pathway is cofactor biosynthesis; biotin biosynthesis; biotin from 7,8-diaminononanoate: step 1/2. Catalyzes a mechanistically unusual reaction, the ATP-dependent insertion of CO2 between the N7 and N8 nitrogen atoms of 7,8-diaminopelargonic acid (DAPA, also called 7,8-diammoniononanoate) to form a ureido ring. The protein is ATP-dependent dethiobiotin synthetase BioD of Mycobacterium bovis (strain BCG / Pasteur 1173P2).